The sequence spans 154 residues: Large ribosomal subunit protein uL23 (154 aa).

Residues 1–39 form a disordered region; the sequence is MAPAKADPSKKSDPKAQAAKVAKAVKSGSTLKKKSQKIR. Positions 15 to 26 are enriched in low complexity; the sequence is KAQAAKVAKAVK.

This sequence belongs to the universal ribosomal protein uL23 family.

This protein binds to a specific region on the 26S rRNA. The polypeptide is Large ribosomal subunit protein uL23 (RPL23A) (Nicotiana tabacum (Common tobacco)).